Reading from the N-terminus, the 409-residue chain is MVECVKGRPNVLAIVLAGGEGKRLFPLTEDRAKPAVPFGGTYRLIDFVLSNLVNAGYLKIAVLTQYKSHSLDRHISVSWNVSGPTGQYIASVPAQQRLGKRWFTGSADAILQSLNLISDEKPDYVIVFGADHVYRMDPSQMVDEHIKSGKSVSVAGIRVPRHEATAFGCIQSDDEGNITEFLEKPADPPGTPDDPDVTFASMGNYVFTTEALVRALKDDSENEDSEHDMGGDIIPYFVDRGDAHVYDFSRNIVPGATERDKGYWRDVGTIDAFYECHMDLISVHPIFNLYNKEWPIHTTVEGNLPPAKFVQGGIAQSSMVAPGSIISAGTVRNSVLSTDVIVEEGATVEGAVLMPGVRIGKGAVVRHAILDKNVVVRDGELIGVDHDRDSQRFKVSAGGVVTVGKNQVV.

Residues Gly-168, 183-184 (EK), and Ser-201 contribute to the alpha-D-glucose 1-phosphate site.

It belongs to the bacterial/plant glucose-1-phosphate adenylyltransferase family. As to quaternary structure, homotetramer.

The catalysed reaction is alpha-D-glucose 1-phosphate + ATP + H(+) = ADP-alpha-D-glucose + diphosphate. Its pathway is glycan biosynthesis; glycogen biosynthesis. Its function is as follows. Involved in the biosynthesis of ADP-glucose, a building block required for the elongation reactions to produce glycogen. Catalyzes the reaction between ATP and alpha-D-glucose 1-phosphate (G1P) to produce pyrophosphate and ADP-Glc. This Corynebacterium efficiens (strain DSM 44549 / YS-314 / AJ 12310 / JCM 11189 / NBRC 100395) protein is Glucose-1-phosphate adenylyltransferase.